We begin with the raw amino-acid sequence, 334 residues long: Fructose-1,6-bisphosphatase class 1 (334 aa).

Mg(2+)-binding residues include Glu93, Asp117, Leu119, and Asp120. Residues 120–123, Asn213, Tyr244, and Lys274 contribute to the substrate site; that span reads DGSS. A Mg(2+)-binding site is contributed by Glu280.

The protein belongs to the FBPase class 1 family. In terms of assembly, homotetramer. The cofactor is Mg(2+).

The protein resides in the cytoplasm. It catalyses the reaction beta-D-fructose 1,6-bisphosphate + H2O = beta-D-fructose 6-phosphate + phosphate. Its pathway is carbohydrate biosynthesis; gluconeogenesis. This chain is Fructose-1,6-bisphosphatase class 1, found in Flavobacterium johnsoniae (strain ATCC 17061 / DSM 2064 / JCM 8514 / BCRC 14874 / CCUG 350202 / NBRC 14942 / NCIMB 11054 / UW101) (Cytophaga johnsonae).